The primary structure comprises 353 residues: UPF0283 membrane protein YcjF (353 aa).

Residues Met1–Pro19 show a composition bias toward basic and acidic residues. The segment at Met1 to Arg35 is disordered. 3 consecutive transmembrane segments (helical) span residues Met70–Thr90, Val100–Val120, and Glu213–Trp233.

The protein belongs to the UPF0283 family.

It is found in the cell inner membrane. The sequence is that of UPF0283 membrane protein YcjF from Salmonella agona (strain SL483).